The following is a 134-amino-acid chain: Complexin-2 (134 aa).

A disordered region spans residues methionine 1 to glutamate 114. Residues aspartate 15–alanine 85 are compositionally biased toward basic and acidic residues. Positions proline 28–alanine 84 form a coiled coil. An interaction with the SNARE complex region spans residues leucine 41–proline 97. At serine 93 the chain carries Phosphoserine.

Belongs to the complexin/synaphin family. In terms of assembly, binds to the SNARE core complex containing SNAP25, VAMP2 and STX1A. As to expression, nervous system. Also present in adrenal chromaffin cells (at protein level).

Its subcellular location is the cytoplasm. It is found in the cytosol. The protein resides in the presynapse. The protein localises to the nucleus. It localises to the perikaryon. Negatively regulates the formation of synaptic vesicle clustering at active zone to the presynaptic membrane in postmitotic neurons. Positively regulates a late step in exocytosis of various cytoplasmic vesicles, such as synaptic vesicles and other secretory vesicles. Also involved in mast cell exocytosis. This Bos taurus (Bovine) protein is Complexin-2 (CPLX2).